A 337-amino-acid polypeptide reads, in one-letter code: Interferon gamma receptor 2 (337 aa).

Residues 1–21 form the signal peptide; the sequence is MRPTLLWSLLLLLGVFAAAAA. The Extracellular segment spans residues 28–247; it reads SQLPAPQHPK…MADASTELQQ (220 aa). A Fibronectin type-III 1 domain is found at 31-129; it reads PAPQHPKIRL…GALHSAWVTM (99 aa). N-linked (GlcNAc...) asparagine glycosylation is found at Asn56 and Asn85. A disulfide bridge links Cys86 with Cys94. Residues Asn110, Asn137, Asn219, and Asn231 are each glycosylated (N-linked (GlcNAc...) asparagine). A Fibronectin type-III 2 domain is found at 142–240; the sequence is PPENIEVTPG…NISCYETMAD (99 aa). Cys209 and Cys234 are oxidised to a cystine. A helical transmembrane segment spans residues 248–268; it reads VILISVGTFSLLSVLAGACFF. The Cytoplasmic segment spans residues 269–337; sequence LVLKYRGLIK…KEQEDVLQTL (69 aa). Positions 276–277 match the Dileucine internalization motif motif; sequence LI.

The protein belongs to the type II cytokine receptor family. In terms of assembly, heterodimer with IFNGR1, to form the IFNG receptor complex. Interacts (via intracellular domain) with JAK2. In terms of tissue distribution, expressed in T-cells (at protein level).

It is found in the cell membrane. The protein resides in the cytoplasmic vesicle membrane. Its subcellular location is the golgi apparatus membrane. The protein localises to the endoplasmic reticulum membrane. It localises to the cytoplasm. Functionally, associates with IFNGR1 to form a receptor for the cytokine interferon gamma (IFNG). Ligand binding stimulates activation of the JAK/STAT signaling pathway. Required for signal transduction in contrast to other receptor subunit responsible for ligand binding. The sequence is that of Interferon gamma receptor 2 from Homo sapiens (Human).